Here is a 414-residue protein sequence, read N- to C-terminus: tRNA dimethylallyltransferase (414 aa).

33-40 (APTASGKT) serves as a coordination point for ATP. 35–40 (TASGKT) contacts substrate. Interaction with substrate tRNA stretches follow at residues 58 to 61 (DSAL), 182 to 186 (QRITR), and 266 to 271 (RCVGYR).

The protein belongs to the IPP transferase family. As to quaternary structure, monomer. It depends on Mg(2+) as a cofactor.

It catalyses the reaction adenosine(37) in tRNA + dimethylallyl diphosphate = N(6)-dimethylallyladenosine(37) in tRNA + diphosphate. Its function is as follows. Catalyzes the transfer of a dimethylallyl group onto the adenine at position 37 in tRNAs that read codons beginning with uridine, leading to the formation of N6-(dimethylallyl)adenosine (i(6)A). The polypeptide is tRNA dimethylallyltransferase (Psychrobacter arcticus (strain DSM 17307 / VKM B-2377 / 273-4)).